Here is a 387-residue protein sequence, read N- to C-terminus: Phosphoglycerate kinase (387 aa).

Residues 21 to 23, R36, 59 to 62, R113, and R146 each bind substrate; these read DLN and HLGR. ATP-binding positions include K197, E314, and 340 to 343; that span reads GGDT.

The protein belongs to the phosphoglycerate kinase family. As to quaternary structure, monomer.

It is found in the cytoplasm. It catalyses the reaction (2R)-3-phosphoglycerate + ATP = (2R)-3-phospho-glyceroyl phosphate + ADP. It functions in the pathway carbohydrate degradation; glycolysis; pyruvate from D-glyceraldehyde 3-phosphate: step 2/5. This is Phosphoglycerate kinase from Pseudomonas syringae pv. tomato (strain ATCC BAA-871 / DC3000).